Reading from the N-terminus, the 325-residue chain is MNLKKHSERKFDLITVGRACIDLNAVEYNRPMEETMTFSKYVGGSPANIAIGTAKLGLKVGFIGKISDDQHGRFIEKYMRDLAINTDGMVKDTEGRKVGLAFTEIKSPDECSILMYRENVADLYLTPEEISEDYIKEARVLLISGTALAQSPSREAVLKAVSLARKNDVVVAFELDYRPYTWKNSEETAVYYSLVAEQADVIIGTRDEFDMMENQVGGKNEATKAYLFQHQAKIVVIKHGVEGSFAYTKAGETFQAQAYKTKVLKTFGAGDSYASAFLYGLFSDESIETALKYGSAAASIVVSKHSSSDAMPTADEIKALIAQAE.

It belongs to the carbohydrate kinase PfkB family.

It catalyses the reaction 5-dehydro-2-deoxy-D-gluconate + ATP = 6-phospho-5-dehydro-2-deoxy-D-gluconate + ADP + H(+). Its pathway is polyol metabolism; myo-inositol degradation into acetyl-CoA; acetyl-CoA from myo-inositol: step 5/7. In terms of biological role, catalyzes the phosphorylation of 5-dehydro-2-deoxy-D-gluconate (2-deoxy-5-keto-D-gluconate or DKG) to 6-phospho-5-dehydro-2-deoxy-D-gluconate (DKGP). The polypeptide is 5-dehydro-2-deoxygluconokinase (Listeria monocytogenes serovar 1/2a (strain ATCC BAA-679 / EGD-e)).